The sequence spans 938 residues: Glutamate receptor ionotropic, NMDA 1 (938 aa).

A signal peptide spans 1–18; sequence MSTMRLLTLALLFSCSVA. Over 19 to 559 the chain is Extracellular; that stretch reads RAACDPKIVN…TLDSFMQPFQ (541 aa). 10 N-linked (GlcNAc...) asparagine glycosylation sites follow: Asn-61, Asn-203, Asn-239, Asn-276, Asn-300, Asn-350, Asn-368, Asn-440, Asn-471, and Asn-491. Cys-79 and Cys-308 are oxidised to a cystine. 2 disulfides stabilise this stretch: Cys-420–Cys-454 and Cys-436–Cys-455. Residues Pro-516, Thr-518, and Arg-523 each coordinate glycine. The chain crosses the membrane as a helical span at residues 560–580; sequence STLWLLVGLSVHVVAVMLYLL. Over 581-604 the chain is Cytoplasmic; that stretch reads DRFSPFGRFKVNSEEEEEDALTLS. The tract at residues 603–624 is pore-forming; that stretch reads LSSAMWFSWGVLLNSGIGEGAP. The discontinuously helical intramembrane region spans 605 to 615; the sequence is SAMWFSWGVLL. Residues 616–627 are Cytoplasmic-facing; that stretch reads NSGIGEGAPRSF. The helical transmembrane segment at 628–648 threads the bilayer; sequence SARILGMVWAGFAMIIVASYT. The Extracellular segment spans residues 649–811; sequence ANLAAFLVLD…SNAPATLTFE (163 aa). Asn-674 carries an N-linked (GlcNAc...) asparagine glycan. The glycine site is built by Ser-688 and Asp-732. A disulfide bond links Cys-744 and Cys-798. An N-linked (GlcNAc...) asparagine glycan is attached at Asn-771. The helical transmembrane segment at 812-835 threads the bilayer; it reads NMAGVFMLVAGGIVAGIFLIFIEI. Residues 836–938 lie on the Cytoplasmic side of the membrane; sequence AYKRHKDARR…LQLCSRHRES (103 aa). 4 positions are modified to phosphoserine; by PKC: Ser-889, Ser-890, Ser-896, and Ser-897. The tract at residues 889–938 is disordered; the sequence is SSFKRRRSSKDTSTGGGRGALQNQKDTVLPRRAIEREEGQLQLCSRHRES. The span at 916–927 shows a compositional bias: basic and acidic residues; that stretch reads VLPRRAIEREEG.

Belongs to the glutamate-gated ion channel (TC 1.A.10.1) family. NR1/GRIN1 subfamily. Heterotetramer; the NMDAR subunits are modular and harbor tiered domains that function in concert to regulate opening and closing of the cation-selective ion channel pore. Forms heterotetrameric channels composed of two GluN1/zeta subunits (GRIN1), and two identical GluN2/epsilon subunits (GRIN2A, GRIN2B, GRIN2C or GRIN2D) or GluN3 subunits (GRIN3A or GRIN3B) (in vitro). Can also form heterotetrameric channels that contain at least two GluN1 subunits and at least two different GluN2 subunits (or a combination of one GluN2 and one GluN3 subunits) (in vitro). In vivo, the subunit composition may vary in function of the expression levels of the different subunits. Found in a complex with GRIN2A or GRIN2B, GRIN3A and PPP2CB. Found in a complex with GRIN2A or GRIN2B and GRIN3B. Interacts with SNX27 (via PDZ domain); the interaction is required for recycling to the plasma membrane when endocytosed and prevent degradation in lysosomes. Interacts with DLG4 and MPDZ. Interacts with LRFN1 and LRFN2. Interacts with MYZAP. Found in a complex with DLG4 and PRR7. Found in a complex with GRIN2B and PRR7. Interacts with PRR7; the interaction is reduced following NMDA receptor activity. Post-translationally, NMDA is probably regulated by C-terminal phosphorylation of an isoform of GRIN1 by PKC. Dephosphorylated on Ser-897 probably by protein phosphatase 2A (PPP2CB). Its phosphorylated state is influenced by the formation of the NMDAR-PPP2CB complex and the NMDAR channel activity.

It localises to the cell membrane. It is found in the postsynaptic cell membrane. Its subcellular location is the postsynaptic density membrane. The protein resides in the synaptic cell membrane. It carries out the reaction Ca(2+)(in) = Ca(2+)(out). The catalysed reaction is Na(+)(in) = Na(+)(out). The enzyme catalyses K(+)(in) = K(+)(out). NMDA glutamate receptor activity is inhbited by Mg2(+) in a voltage-dependent manner; Mg2(+)-induced blockade occurs only at negative potentials and decreases with membrane depolarization. 7-chlorokynurenate (50 uM) or Zn2(+) (100 uM) partially inhibit the NMDA glutamate receptor activity, while acide 2-amino-5-phosphonovalerique(100 uM) almost completely blocked the NMDA glutamate receptor activity. Dizocilpine (1 uM) results in long lasting and almost complete block of the NMDA glutamate receptor activity. In terms of biological role, component of N-methyl-D-aspartate (NMDA) receptors (NMDARs) that function as heterotetrameric, ligand-gated cation channels with high calcium permeability and voltage-dependent block by Mg(2+). NMDARs participate in synaptic plasticity for learning and memory formation by contributing to the long-term potentiation (LTP). Channel activation requires binding of the neurotransmitter L-glutamate to the GluN2 subunit, glycine or D-serine binding to the GluN1 subunit, plus membrane depolarization to eliminate channel inhibition by Mg(2+). NMDARs mediate simultaneously the potasium efflux and the influx of calcium and sodium. Each GluN2 or GluN3 subunit confers differential attributes to channel properties, including activation, deactivation and desensitization kinetics, pH sensitivity, Ca2(+) permeability, and binding to allosteric modulators. The sequence is that of Glutamate receptor ionotropic, NMDA 1 from Homo sapiens (Human).